The primary structure comprises 254 residues: Tyrosine-protein phosphatase YwqE (254 aa).

The protein belongs to the metallo-dependent hydrolases superfamily. CpsB/CapC family. It depends on Mn(2+) as a cofactor.

The enzyme catalyses O-phospho-L-tyrosyl-[protein] + H2O = L-tyrosyl-[protein] + phosphate. Inhibited by vanadate and sodium pyrophosphate. Not inhibited by sodium fluoride. In terms of biological role, dephosphorylates the phosphotyrosine-containing proteins YwqD, YwqF and Ssb. This is Tyrosine-protein phosphatase YwqE (ywqE) from Bacillus subtilis (strain 168).